Reading from the N-terminus, the 134-residue chain is Putative pre-16S rRNA nuclease (134 aa).

The protein belongs to the YqgF nuclease family.

The protein resides in the cytoplasm. Functionally, could be a nuclease involved in processing of the 5'-end of pre-16S rRNA. This chain is Putative pre-16S rRNA nuclease, found in Helicobacter pylori (strain Shi470).